A 242-amino-acid chain; its full sequence is MRKIIIAGNWKMHKTQAEAQAFLQGFKPLIEDAAESREVVLCVPFTDLSGMSQQLHGGRVRLGAQNVHWEASGAYTGEISAAMLTEIGIHYVVIGHSERRQYFGETDETANLRVLAAQKAGLIPILCVGESKAQRDAGETEQVIVDQVKKGLVNVDQSNLVIAYEPIWAIGTGDTCAATEANRVIGLIREQLTNSQVTIQYGGSVNANNVDEIMAQPEIDGALVGGASLEPQSFARIVNFQP.

9–11 (NWK) contributes to the substrate binding site. His-96 (electrophile) is an active-site residue. Glu-165 acts as the Proton acceptor in catalysis. Substrate contacts are provided by residues Gly-171, Ser-204, and 225–226 (GG).

It belongs to the triosephosphate isomerase family. In terms of assembly, homodimer.

It is found in the cytoplasm. It carries out the reaction D-glyceraldehyde 3-phosphate = dihydroxyacetone phosphate. Its pathway is carbohydrate biosynthesis; gluconeogenesis. It functions in the pathway carbohydrate degradation; glycolysis; D-glyceraldehyde 3-phosphate from glycerone phosphate: step 1/1. Its function is as follows. Involved in the gluconeogenesis. Catalyzes stereospecifically the conversion of dihydroxyacetone phosphate (DHAP) to D-glyceraldehyde-3-phosphate (G3P). In Synechocystis sp. (strain ATCC 27184 / PCC 6803 / Kazusa), this protein is Triosephosphate isomerase.